Consider the following 53-residue polypeptide: Large ribosomal subunit protein eL40 (53 aa).

This sequence belongs to the eukaryotic ribosomal protein eL40 family.

The chain is Large ribosomal subunit protein eL40 from Pyrobaculum neutrophilum (strain DSM 2338 / JCM 9278 / NBRC 100436 / V24Sta) (Thermoproteus neutrophilus).